The primary structure comprises 459 residues: Argininosuccinate lyase (459 aa).

It belongs to the lyase 1 family. Argininosuccinate lyase subfamily.

It localises to the cytoplasm. It catalyses the reaction 2-(N(omega)-L-arginino)succinate = fumarate + L-arginine. It functions in the pathway amino-acid biosynthesis; L-arginine biosynthesis; L-arginine from L-ornithine and carbamoyl phosphate: step 3/3. In Staphylococcus aureus (strain bovine RF122 / ET3-1), this protein is Argininosuccinate lyase.